We begin with the raw amino-acid sequence, 321 residues long: Phospho-N-acetylmuramoyl-pentapeptide-transferase (321 aa).

The next 10 membrane-spanning stretches (helical) occupy residues Met1 to Ile21, Met50 to Val70, Ile76 to Ile96, Phe112 to Val132, Ile140 to Trp160, Gly176 to Leu196, Ala200 to Ile220, Val225 to Met245, Leu250 to Val270, and Val300 to Val320.

The protein belongs to the glycosyltransferase 4 family. MraY subfamily. The cofactor is Mg(2+).

The protein resides in the cell membrane. The catalysed reaction is UDP-N-acetyl-alpha-D-muramoyl-L-alanyl-gamma-D-glutamyl-L-lysyl-D-alanyl-D-alanine + di-trans,octa-cis-undecaprenyl phosphate = Mur2Ac(oyl-L-Ala-gamma-D-Glu-L-Lys-D-Ala-D-Ala)-di-trans,octa-cis-undecaprenyl diphosphate + UMP. It functions in the pathway cell wall biogenesis; peptidoglycan biosynthesis. Functionally, catalyzes the initial step of the lipid cycle reactions in the biosynthesis of the cell wall peptidoglycan: transfers peptidoglycan precursor phospho-MurNAc-pentapeptide from UDP-MurNAc-pentapeptide onto the lipid carrier undecaprenyl phosphate, yielding undecaprenyl-pyrophosphoryl-MurNAc-pentapeptide, known as lipid I. This is Phospho-N-acetylmuramoyl-pentapeptide-transferase from Staphylococcus aureus (strain Mu50 / ATCC 700699).